The sequence spans 243 residues: Carboxy-S-adenosyl-L-methionine synthase (243 aa).

S-adenosyl-L-methionine contacts are provided by residues Tyr35, 68–70 (GCS), 92–93 (DN), and Arg199.

It belongs to the class I-like SAM-binding methyltransferase superfamily. Cx-SAM synthase family. As to quaternary structure, homodimer.

The enzyme catalyses prephenate + S-adenosyl-L-methionine = carboxy-S-adenosyl-L-methionine + 3-phenylpyruvate + H2O. Functionally, catalyzes the conversion of S-adenosyl-L-methionine (SAM) to carboxy-S-adenosyl-L-methionine (Cx-SAM). In Helicobacter pylori (strain J99 / ATCC 700824) (Campylobacter pylori J99), this protein is Carboxy-S-adenosyl-L-methionine synthase.